The following is a 161-amino-acid chain: Nucleotide-binding protein HCH_04620 (161 aa).

Belongs to the YajQ family.

In terms of biological role, nucleotide-binding protein. The sequence is that of Nucleotide-binding protein HCH_04620 from Hahella chejuensis (strain KCTC 2396).